A 513-amino-acid chain; its full sequence is ATP synthase subunit alpha (513 aa).

Residue 169 to 176 (GDRQTGKT) coordinates ATP.

Belongs to the ATPase alpha/beta chains family. In terms of assembly, F-type ATPases have 2 components, CF(1) - the catalytic core - and CF(0) - the membrane proton channel. CF(1) has five subunits: alpha(3), beta(3), gamma(1), delta(1), epsilon(1). CF(0) has three main subunits: a(1), b(2) and c(9-12). The alpha and beta chains form an alternating ring which encloses part of the gamma chain. CF(1) is attached to CF(0) by a central stalk formed by the gamma and epsilon chains, while a peripheral stalk is formed by the delta and b chains.

Its subcellular location is the cell inner membrane. It catalyses the reaction ATP + H2O + 4 H(+)(in) = ADP + phosphate + 5 H(+)(out). Its function is as follows. Produces ATP from ADP in the presence of a proton gradient across the membrane. The alpha chain is a regulatory subunit. This Methylobacillus flagellatus (strain ATCC 51484 / DSM 6875 / VKM B-1610 / KT) protein is ATP synthase subunit alpha.